We begin with the raw amino-acid sequence, 337 residues long: Phosphatidate cytidylyltransferase, mitochondrial (337 aa).

The protein belongs to the TAM41 family. Requires Mg(2+) as cofactor.

Its subcellular location is the mitochondrion inner membrane. It catalyses the reaction a 1,2-diacyl-sn-glycero-3-phosphate + CTP + H(+) = a CDP-1,2-diacyl-sn-glycerol + diphosphate. It participates in phospholipid metabolism; CDP-diacylglycerol biosynthesis; CDP-diacylglycerol from sn-glycerol 3-phosphate: step 3/3. In terms of biological role, catalyzes the conversion of phosphatidic acid (PA) to CDP-diacylglycerol (CDP-DAG), an essential intermediate in the synthesis of phosphatidylglycerol, cardiolipin and phosphatidylinositol. This chain is Phosphatidate cytidylyltransferase, mitochondrial (Tamm41), found in Mus musculus (Mouse).